We begin with the raw amino-acid sequence, 260 residues long: Hemin import ATP-binding protein HmuV (260 aa).

The ABC transporter domain occupies 7 to 243; it reads IQASNISVTF…ERIEQVYGYS (237 aa). Residue 39–46 participates in ATP binding; sequence GPNGAGKS.

Belongs to the ABC transporter superfamily. Heme (hemin) importer (TC 3.A.1.14.5) family. In terms of assembly, the complex is composed of two ATP-binding proteins (HmuV), two transmembrane proteins (HmuU) and a solute-binding protein (HmuT).

It is found in the cell inner membrane. In terms of biological role, part of the ABC transporter complex HmuTUV involved in hemin import. Responsible for energy coupling to the transport system. The protein is Hemin import ATP-binding protein HmuV of Vibrio anguillarum (strain ATCC 68554 / 775) (Listonella anguillarum).